The following is a 1642-amino-acid chain: Cholesterol transporter ABCA5 (1642 aa).

Residues Ser32–Met52 form a helical membrane-spanning segment. Asn86 carries N-linked (GlcNAc...) asparagine glycosylation. Helical transmembrane passes span Val220–Ile240, Leu264–Ile284, Ile297–Leu317, Gly328–Ile348, and Leu355–Met375. N-linked (GlcNAc...) asparagine glycosylation is present at Asn388. Residues Leu396–Tyr416 traverse the membrane as a helical segment. Residue Asn458 is glycosylated (N-linked (GlcNAc...) asparagine). The region spanning Ile478 to Tyr713 is the ABC transporter 1 domain. Gly514 to Ser521 lines the ATP pocket. A helical transmembrane segment spans residues Ala864 to His884. Asn919 carries an N-linked (GlcNAc...) asparagine glycan. A helical membrane pass occupies residues Val967 to Ile987. A glycan (N-linked (GlcNAc...) asparagine) is linked at Asn996. The next 6 helical transmembrane spans lie at Leu1021–Met1041, Val1071–Phe1091, Phe1102–Ile1122, Ser1138–Leu1158, Ala1164–Ile1184, and Leu1207–His1227. The region spanning Ile1290 to Lys1533 is the ABC transporter 2 domain. Position 1333 to 1340 (Gly1333 to Ser1340) interacts with ATP.

Belongs to the ABC transporter superfamily. ABCA family. Post-translationally, N-glycosylated. Expressed in cardiomyocytes, oligodendrocytes and astrocytes in brain, alveolar type 2 cells in lung and follicular cells in the thyroid gland (at protein level). Detected in brain, testis, lung, heart, liver, kidney, skeletal muscle and placenta. Strongly expressed in the basal cells of the seminiferous tubules, interstitial cells consisting of Leydig cells, as well as the tunica albuginea. In the epididymis, specifically and very strongly expressed in the connective tissue outlining the cylindrical epithelium in the corpus and cauda regions, including fibrocytes and smooth muscle cells, as well as within the basal and tall columnar cells of the corpus cylindrical epithelium. Highly expressed in the brain with high expression in cortical and hippocampal neurons and moderately in the lung.

The protein resides in the golgi apparatus membrane. Its subcellular location is the lysosome membrane. The protein localises to the late endosome membrane. It is found in the cell membrane. It catalyses the reaction cholesterol(in) + ATP + H2O = cholesterol(out) + ADP + phosphate + H(+). Its function is as follows. Cholesterol efflux transporter in macrophages that is responsible for APOAI/high-density lipoproteins (HDL) formation at the plasma membrane under high cholesterol levels and participates in reverse cholesterol transport. May play a role in the processing of autolysosomes. The protein is Cholesterol transporter ABCA5 of Mus musculus (Mouse).